Consider the following 267-residue polypeptide: Phosphate import ATP-binding protein PstB (267 aa).

The region spanning 21–262 is the ABC transporter domain; the sequence is VAARNLDFYY…PSKQQTEDYI (242 aa). 53-60 lines the ATP pocket; sequence GPSGCGKS.

Belongs to the ABC transporter superfamily. Phosphate importer (TC 3.A.1.7) family. As to quaternary structure, the complex is composed of two ATP-binding proteins (PstB), two transmembrane proteins (PstC and PstA) and a solute-binding protein (PstS).

The protein resides in the cell inner membrane. The enzyme catalyses phosphate(out) + ATP + H2O = ADP + 2 phosphate(in) + H(+). Its function is as follows. Part of the ABC transporter complex PstSACB involved in phosphate import. Responsible for energy coupling to the transport system. This is Phosphate import ATP-binding protein PstB from Xanthomonas campestris pv. campestris (strain 8004).